The chain runs to 452 residues: Phosphoglucosamine mutase (452 aa).

S88 acts as the Phosphoserine intermediate in catalysis. Mg(2+) is bound by residues S88, D234, D236, and D238. S88 is modified (phosphoserine).

This sequence belongs to the phosphohexose mutase family. Mg(2+) serves as cofactor. In terms of processing, activated by phosphorylation.

It catalyses the reaction alpha-D-glucosamine 1-phosphate = D-glucosamine 6-phosphate. In terms of biological role, catalyzes the conversion of glucosamine-6-phosphate to glucosamine-1-phosphate. This is Phosphoglucosamine mutase from Methanococcus aeolicus (strain ATCC BAA-1280 / DSM 17508 / OCM 812 / Nankai-3).